Consider the following 149-residue polypeptide: Protein Rv2250A (149 aa).

This chain is Protein Rv2250A, found in Mycobacterium tuberculosis (strain ATCC 25618 / H37Rv).